A 701-amino-acid polypeptide reads, in one-letter code: Polyribonucleotide nucleotidyltransferase (701 aa).

2 residues coordinate Mg(2+): Asp487 and Asp493. The KH domain occupies 554 to 613 (PTMLQMKIDSDKIRDVIGKGGATIRGICEETKASIDIEDDGSVKIYGETKEAAEAAKLRV). An S1 motif domain is found at 623-691 (GKIYVGKVER…NRGRIKLSIK (69 aa)).

Belongs to the polyribonucleotide nucleotidyltransferase family. Component of the RNA degradosome, which is a multiprotein complex involved in RNA processing and mRNA degradation. Requires Mg(2+) as cofactor.

It localises to the cytoplasm. It catalyses the reaction RNA(n+1) + phosphate = RNA(n) + a ribonucleoside 5'-diphosphate. Its function is as follows. Involved in mRNA degradation. Catalyzes the phosphorolysis of single-stranded polyribonucleotides processively in the 3'- to 5'-direction. The protein is Polyribonucleotide nucleotidyltransferase of Pseudomonas aeruginosa (strain LESB58).